The following is a 295-amino-acid chain: Probable phosphoglycerate mutase PMU1 (295 aa).

The active-site Tele-phosphohistidine intermediate is histidine 61. Glutamate 170 functions as the Proton donor/acceptor in the catalytic mechanism.

Belongs to the phosphoglycerate mutase family.

The protein resides in the cytoplasm. Its subcellular location is the nucleus. Functionally, probable phosphomutase that may have a function related to the manipulation of phosphate groups on carbohydrates. Reduces trehalose-6-phosphate levels when overexpressed in TPS2-deleted cells. Reduces 5'-Phosphoribosyl-4-carboxamide-5-aminoimidazole (AICAR) levels, a metabolic intermediate at the crossroads between AMP and histidine biosynthesis pathways, when overexpressed in a ADE3-ADE16-ADE17 triple deletant. The polypeptide is Probable phosphoglycerate mutase PMU1 (Saccharomyces cerevisiae (strain ATCC 204508 / S288c) (Baker's yeast)).